A 248-amino-acid chain; its full sequence is Small ribosomal subunit protein eS6 (248 aa).

The tract at residues 215 to 248 (VQRKKESKAKREEAKRRRSASIRESKSSVSSDKK) is disordered. Positions 223–248 (AKREEAKRRRSASIRESKSSVSSDKK) are enriched in basic and acidic residues. Phosphoserine is present on residues S233, S235, S239, S242, S244, and S245.

It belongs to the eukaryotic ribosomal protein eS6 family. Component of the small ribosomal subunit. Part of the small subunit (SSU) processome, composed of more than 70 proteins and the RNA chaperone small nucleolar RNA (snoRNA) U3. Post-translationally, ribosomal protein S6 is the major substrate of protein kinases in eukaryote ribosomes. The phosphorylation is stimulated by growth factors, tumor promoting agents, and mitogens. It is dephosphorylated at growth arrest.

The protein resides in the cytoplasm. It localises to the nucleus. The protein localises to the nucleolus. Component of the 40S small ribosomal subunit. Plays an important role in controlling cell growth and proliferation through the selective translation of particular classes of mRNA. Part of the small subunit (SSU) processome, first precursor of the small eukaryotic ribosomal subunit. During the assembly of the SSU processome in the nucleolus, many ribosome biogenesis factors, an RNA chaperone and ribosomal proteins associate with the nascent pre-rRNA and work in concert to generate RNA folding, modifications, rearrangements and cleavage as well as targeted degradation of pre-ribosomal RNA by the RNA exosome. The sequence is that of Small ribosomal subunit protein eS6 (RpS6) from Drosophila melanogaster (Fruit fly).